An 824-amino-acid chain; its full sequence is Putative beta-glucuronidase (824 aa).

Residues 26–43 form a helical membrane-spanning segment; sequence YLKLVLVLYLIMVSWSGY. Catalysis depends on Glu430, which acts as the Proton donor.

It belongs to the glycosyl hydrolase 2 family.

It is found in the membrane. It catalyses the reaction a beta-D-glucuronoside + H2O = D-glucuronate + an alcohol. In terms of biological role, glycoside hydrolase that may be involved in ulvan degradation. Ulvan is the main polysaccharide component of the Ulvales (green seaweed) cell wall. It is composed of disaccharide building blocks comprising 3-sulfated rhamnose (Rha3S) linked to D-glucuronic acid (GlcA), L-iduronic acid (IduA), or D-xylose (Xyl). This Formosa agariphila (strain DSM 15362 / KCTC 12365 / LMG 23005 / KMM 3901 / M-2Alg 35-1) protein is Putative beta-glucuronidase.